The primary structure comprises 212 residues: Nuclear transcription factor Y subunit C-7 (212 aa).

The span at 1-10 (MEENNGNNNH) shows a compositional bias: polar residues. Disordered regions lie at residues 1 to 23 (MEENNGNNNHYLPQPSSSQLPPP) and 190 to 212 (EWPAVPGDGEEAAGEIGGSSGGN).

Belongs to the NFYC/HAP5 subunit family. In terms of assembly, heterotrimeric transcription factor composed of three components, NF-YA, NF-YB and NF-YC. NF-YB and NF-YC must interact and dimerize for NF-YA association and DNA binding. In terms of tissue distribution, expressed in flowers.

Its subcellular location is the nucleus. In terms of biological role, stimulates the transcription of various genes by recognizing and binding to a CCAAT motif in promoters. This Arabidopsis thaliana (Mouse-ear cress) protein is Nuclear transcription factor Y subunit C-7 (NFYC7).